The primary structure comprises 295 residues: Ribosomal RNA small subunit methyltransferase A (295 aa).

6 residues coordinate S-adenosyl-L-methionine: Asn25, Leu27, Gly52, Glu73, Asp98, and Asn120.

It belongs to the class I-like SAM-binding methyltransferase superfamily. rRNA adenine N(6)-methyltransferase family. RsmA subfamily.

It localises to the cytoplasm. It catalyses the reaction adenosine(1518)/adenosine(1519) in 16S rRNA + 4 S-adenosyl-L-methionine = N(6)-dimethyladenosine(1518)/N(6)-dimethyladenosine(1519) in 16S rRNA + 4 S-adenosyl-L-homocysteine + 4 H(+). In terms of biological role, specifically dimethylates two adjacent adenosines (A1518 and A1519) in the loop of a conserved hairpin near the 3'-end of 16S rRNA in the 30S particle. May play a critical role in biogenesis of 30S subunits. This is Ribosomal RNA small subunit methyltransferase A from Desulfotalea psychrophila (strain LSv54 / DSM 12343).